The primary structure comprises 95 residues: Integration host factor subunit beta (95 aa).

The protein belongs to the bacterial histone-like protein family. Heterodimer of an alpha and a beta chain.

Functionally, this protein is one of the two subunits of integration host factor, a specific DNA-binding protein that functions in genetic recombination as well as in transcriptional and translational control. The sequence is that of Integration host factor subunit beta from Shewanella putrefaciens (strain CN-32 / ATCC BAA-453).